Consider the following 326-residue polypeptide: MLSPIRTTFHNSVNIVQSSPCQTVSFAGKEYELKVIDEKTPILFQWFEPNPERYKKDEVPIVNTKQHPYLDNVTNAARIESDRMIGIFVDGDFSVNQKTAFSKLERDFENVMIIYREDVDFSMYDRKLSDIYHDIICEQRLRTEDKRDEYLLNLLEKELREISKAQDSLISMYAKKRNHAWFDFFRNLALLKAGEIFRCTYNTKNHGISFGEGCIYLDMDMILTGKLGTIYAPDGISMHVDRRNDSVNIENSAIIVNRSNHPALLEGLSFMHSKVDAHPYYDGLGKGVKKYFNFTPLHNYNHFCDFIEFNHPNIIMNTSQYTCSSW.

Residues 45–47 (QWF), Tyr69, and 216–219 (YLDM) each bind UDP-N-acetyl-alpha-D-glucosamine. Positions 218–220 (DMD) match the DXD motif motif. Position 220 (Asp220) interacts with Mn(2+). Glu250 serves as the catalytic Proton acceptor. Mn(2+)-binding residues include Asn317 and Ser319. UDP-N-acetyl-alpha-D-glucosamine contacts are provided by residues Ser319 and 324 to 326 (SSW).

This sequence belongs to the glycosyltransferase NleB family. Requires Mn(2+) as cofactor.

It is found in the secreted. It localises to the host cell. The enzyme catalyses L-arginyl-[protein] + UDP-N-acetyl-alpha-D-glucosamine = N(omega)-(N-acetyl-beta-D-glucosaminyl)-L-arginyl-[protein] + UDP + H(+). Functionally, protein-arginine N-acetylglucosaminyltransferase effector that catalyzes the transfer of a single N-acetylglucosamine (GlcNAc) to a conserved arginine residue of host target proteins. In contrast to NleB1, not able to disrupt TNF signaling in infected cells. Shows a lower enzymatic activity than NleB1. In Escherichia coli O127:H6 (strain E2348/69 / EPEC), this protein is Protein-arginine N-acetylglucosaminyltransferase NleB2.